Reading from the N-terminus, the 65-residue chain is UPF0370 protein Ent638_2968 (65 aa).

A helical membrane pass occupies residues L4 to I24. Positions K39–K65 are disordered. Residues L42–K65 show a composition bias toward basic and acidic residues.

The protein belongs to the UPF0370 family.

Its subcellular location is the cell membrane. This is UPF0370 protein Ent638_2968 from Enterobacter sp. (strain 638).